The following is an 82-amino-acid chain: U1-plectoxin-Pt1a (82 aa).

The N-terminal stretch at 1–20 (MKHLIFSSALVCALVVCTFA) is a signal peptide. Residues 21-33 (EEQVNVPFLPDER) constitute a propeptide that is removed on maturation. 5 disulfide bridges follow: Cys37–Cys51, Cys44–Cys57, Cys50–Cys68, Cys54–Cys77, and Cys59–Cys66. Ser79 carries the O-palmitoyl serine lipid modification. A propeptide spanning residues 80-82 (RRR) is cleaved from the precursor.

The protein belongs to the neurotoxin 02 (plectoxin) family. 02 (plectoxin) subfamily. Post-translationally, plectoxin-5 presumably undergoes post-translational modification to give rise to plectoxin-6. Expressed by the venom gland.

It is found in the secreted. Potent toxin that may paralyze and/or kill insect pests such as H.virescens (lepidoptera), S.exigua (beet armyworm) and M.sexta (tobacco hornworm). This chain is U1-plectoxin-Pt1a, found in Plectreurys tristis (Spider).